The sequence spans 237 residues: Probable 2-phosphosulfolactate phosphatase (237 aa).

The protein belongs to the ComB family. It depends on Mg(2+) as a cofactor.

It catalyses the reaction (2R)-O-phospho-3-sulfolactate + H2O = (2R)-3-sulfolactate + phosphate. In Thermus thermophilus (strain ATCC 27634 / DSM 579 / HB8), this protein is Probable 2-phosphosulfolactate phosphatase.